The chain runs to 362 residues: Chalcone synthase A (362 aa).

The active site involves C168.

Belongs to the thiolase-like superfamily. Chalcone/stilbene synthases family.

The catalysed reaction is (E)-4-coumaroyl-CoA + 3 malonyl-CoA + 3 H(+) = 2',4,4',6'-tetrahydroxychalcone + 3 CO2 + 4 CoA. It participates in secondary metabolite biosynthesis; flavonoid biosynthesis. In terms of biological role, the primary product of this enzyme is 4,2',4',6'-tetrahydroxychalcone (also termed naringenin-chalcone or chalcone) which can under specific conditions spontaneously isomerize into naringenin. The chain is Chalcone synthase A (CHSA) from Ipomoea trifida (Morning glory).